The following is a 375-amino-acid chain: POU domain, class 3, transcription factor 1-B (375 aa).

Disordered regions lie at residues 1–29 (MAAT…RMHQ), 56–139 (MSLT…QPLI), and 151–200 (MLGP…PSSD). Composition is skewed to polar residues over residues 107-117 (VHQQTPSSHAW), 129-139 (SPGSNSHQPLI), and 151-160 (MLGPQASSLH). A compositionally biased stretch (basic and acidic residues) spans 162–178 (SMRDPLHDDPGVHDTHV). Positions 194–268 (EDAPSSDDLE…LLNKWLEETD (75 aa)) constitute a POU-specific domain. Residues 286 to 345 (KRKKRTSIEVGVKGALENHFLKCPKPSAHEITSLADSLQLEKEVVRVWFCNRRQKEKRMT) constitute a DNA-binding region (homeobox).

This sequence belongs to the POU transcription factor family. Class-3 subfamily.

The protein resides in the nucleus. In terms of biological role, acts as a transcription factor. May play a role in neuronal differentiation. This chain is POU domain, class 3, transcription factor 1-B (pou3f1-b), found in Xenopus laevis (African clawed frog).